The sequence spans 465 residues: Putative subtilisin-like proteinase 1 (465 aa).

The first 17 residues, 1 to 17 (MILAIISLSVVICREVS), serve as a signal peptide directing secretion. Residues 19–90 (YIVMFDQDPS…VKMVVKDSPV (72 aa)) form the Inhibitor I9 domain. Residues 115-447 (PWGLARVGGS…PSLFNANKKK (333 aa)) enclose the Peptidase S8 domain. Active-site charge relay system residues include D148 and H180. A disulfide bridge links C329 with C360. S386 functions as the Charge relay system in the catalytic mechanism.

Belongs to the peptidase S8 family.

It localises to the secreted. The protein localises to the extracellular space. In terms of biological role, may be involved in the degradation of proteins for nutrient acquisition or possess a regulatory function by proteolytic activation of proproteins. This Encephalitozoon cuniculi (strain GB-M1) (Microsporidian parasite) protein is Putative subtilisin-like proteinase 1 (SPL1).